The primary structure comprises 327 residues: Protoheme IX farnesyltransferase (327 aa).

8 helical membrane passes run 35 to 55 (LIPLLLATTLGGMALSEGWPL), 60 to 80 (LVCTLGGGALASAAAGVLNCL), 106 to 126 (SAFIGAIACTLAAAMLLVSGV), 129 to 149 (LAAGLSLLGLCSYVLLYTALL), 157 to 177 (IVIGGVAGAIPPLVGAAAATG), 185 to 205 (WLFALVMVWTPAHFWALALLL), 234 to 254 (GWITVLLSSLGVFALPSGGAF), and 283 to 303 (AKALFRWSILYLFGVCLLLIL).

Belongs to the UbiA prenyltransferase family. Protoheme IX farnesyltransferase subfamily.

Its subcellular location is the cell inner membrane. The catalysed reaction is heme b + (2E,6E)-farnesyl diphosphate + H2O = Fe(II)-heme o + diphosphate. It participates in porphyrin-containing compound metabolism; heme O biosynthesis; heme O from protoheme: step 1/1. Its function is as follows. Converts heme B (protoheme IX) to heme O by substitution of the vinyl group on carbon 2 of heme B porphyrin ring with a hydroxyethyl farnesyl side group. The sequence is that of Protoheme IX farnesyltransferase from Synechococcus sp. (strain CC9605).